We begin with the raw amino-acid sequence, 153 residues long: MKHPLPHYSPILFIYCFCMLQIPSSGASPPLADSPDGLDIVDPERLAYFLKQREIHSNQPKENQDVYKRFLFHYSRTRKPTHPVSAEFAPVHPLMRLAAKLASRRMKRLPRLLRLDSRMATVDFPKKDPTTSLGRPFFLFRPRNGRYTDNNFQ.

Residues methionine 1–glycine 26 form the signal peptide. 3 propeptides span residues alanine 27–arginine 69, phenylalanine 70–arginine 105, and methionine 106–arginine 108. Asparagine 144 is modified (asparagine amide). Residues tyrosine 147–glutamine 153 constitute a propeptide that is removed on maturation.

The protein belongs to the NmU family.

It localises to the secreted. Its function is as follows. Implicated in the regulation of circadian rhythms through autocrine and/or paracrine actions. The protein is Neuromedin-S (Nms) of Mus musculus (Mouse).